The following is an 88-amino-acid chain: MANSPQAKKRARQNERRAEVNKARRSRIRTFLRKVEEAIASGDSSAAADALRSAQPELMRGVTKGILHKNTASRKMSRLSKRVKALSA.

Positions 1–25 are disordered; sequence MANSPQAKKRARQNERRAEVNKARR. Residues 12-22 show a composition bias toward basic and acidic residues; sequence RQNERRAEVNK.

Belongs to the bacterial ribosomal protein bS20 family.

Functionally, binds directly to 16S ribosomal RNA. The sequence is that of Small ribosomal subunit protein bS20 from Dinoroseobacter shibae (strain DSM 16493 / NCIMB 14021 / DFL 12).